A 91-amino-acid chain; its full sequence is uncharacterized protein (91 aa).

The helical transmembrane segment at 50–70 threads the bilayer; sequence FGFFGGPFIGGLAGGLIGSAL.

The protein localises to the cell membrane. This is an uncharacterized protein from Bacillus subtilis (strain 168).